We begin with the raw amino-acid sequence, 233 residues long: Large ribosomal subunit protein uL1 (233 aa).

It belongs to the universal ribosomal protein uL1 family. As to quaternary structure, part of the 50S ribosomal subunit.

Its function is as follows. Binds directly to 23S rRNA. The L1 stalk is quite mobile in the ribosome, and is involved in E site tRNA release. Functionally, protein L1 is also a translational repressor protein, it controls the translation of the L11 operon by binding to its mRNA. This Shewanella putrefaciens (strain CN-32 / ATCC BAA-453) protein is Large ribosomal subunit protein uL1.